We begin with the raw amino-acid sequence, 571 residues long: Proline--tRNA ligase (571 aa).

Belongs to the class-II aminoacyl-tRNA synthetase family. ProS type 1 subfamily. Homodimer.

The protein localises to the cytoplasm. It carries out the reaction tRNA(Pro) + L-proline + ATP = L-prolyl-tRNA(Pro) + AMP + diphosphate. Functionally, catalyzes the attachment of proline to tRNA(Pro) in a two-step reaction: proline is first activated by ATP to form Pro-AMP and then transferred to the acceptor end of tRNA(Pro). As ProRS can inadvertently accommodate and process non-cognate amino acids such as alanine and cysteine, to avoid such errors it has two additional distinct editing activities against alanine. One activity is designated as 'pretransfer' editing and involves the tRNA(Pro)-independent hydrolysis of activated Ala-AMP. The other activity is designated 'posttransfer' editing and involves deacylation of mischarged Ala-tRNA(Pro). The misacylated Cys-tRNA(Pro) is not edited by ProRS. The chain is Proline--tRNA ligase from Proteus mirabilis (strain HI4320).